Consider the following 683-residue polypeptide: Methionine--tRNA ligase (683 aa).

The 'HIGH' region motif lies at 15-25 (PYANGSIHLGH). Zn(2+) contacts are provided by Cys146, Cys149, Cys159, and Cys162. The short motif at 332–336 (KMSKS) is the 'KMSKS' region element. Residue Lys335 participates in ATP binding. The tRNA-binding domain occupies 582-683 (DFAKVDLRIA…QGAQAGMRVM (102 aa)).

This sequence belongs to the class-I aminoacyl-tRNA synthetase family. MetG type 1 subfamily. As to quaternary structure, homodimer. Zn(2+) serves as cofactor.

It is found in the cytoplasm. The enzyme catalyses tRNA(Met) + L-methionine + ATP = L-methionyl-tRNA(Met) + AMP + diphosphate. Is required not only for elongation of protein synthesis but also for the initiation of all mRNA translation through initiator tRNA(fMet) aminoacylation. The protein is Methionine--tRNA ligase of Vibrio cholerae serotype O1 (strain ATCC 39315 / El Tor Inaba N16961).